A 164-amino-acid polypeptide reads, in one-letter code: Neurotrophin-3 (164 aa).

The first 3 residues, 1-3 (IQS), serve as a signal peptide directing secretion. Positions 4-118 (TSMDQGBLSE…GLNRTSRRKR (115 aa)) are excised as a propeptide. A disordered region spans residues 89-126 (LLSENTPLEPPPLYLTEEPMGLNRTSRRKRFAEGKSHR). A glycan (N-linked (GlcNAc...) asparagine) is linked at Asn111.

The protein belongs to the NGF-beta family.

Its subcellular location is the secreted. Its function is as follows. Seems to promote the survival of visceral and proprioceptive sensory neurons. The chain is Neurotrophin-3 (NTF3) from Cylindrophis ruffus (Red-tailed pipe snake).